Consider the following 315-residue polypeptide: Ninja-family protein 1 (315 aa).

Disordered stretches follow at residues 1–28, 68–142, and 156–237; these read MASR…AGEA, SLPG…AQEP, and DQGN…TGDL. The segment covering 99–108 has biased composition (basic and acidic residues); sequence ERWRRREMQS. Positions 156–166 are enriched in polar residues; the sequence is DQGNPSSSMPE. Composition is skewed to low complexity over residues 184 to 197 and 221 to 234; these read SSDN…QNKS and LRTL…TTST.

This sequence belongs to the Ninja family.

Its subcellular location is the nucleus. This is Ninja-family protein 1 (AFP-A1) from Triticum aestivum (Wheat).